Here is a 179-residue protein sequence, read N- to C-terminus: Large ribosomal subunit protein uL5 (179 aa).

Belongs to the universal ribosomal protein uL5 family. As to quaternary structure, part of the 50S ribosomal subunit; part of the 5S rRNA/L5/L18/L25 subcomplex. Contacts the 5S rRNA and the P site tRNA. Forms a bridge to the 30S subunit in the 70S ribosome.

In terms of biological role, this is one of the proteins that bind and probably mediate the attachment of the 5S RNA into the large ribosomal subunit, where it forms part of the central protuberance. In the 70S ribosome it contacts protein S13 of the 30S subunit (bridge B1b), connecting the 2 subunits; this bridge is implicated in subunit movement. Contacts the P site tRNA; the 5S rRNA and some of its associated proteins might help stabilize positioning of ribosome-bound tRNAs. This Chromohalobacter salexigens (strain ATCC BAA-138 / DSM 3043 / CIP 106854 / NCIMB 13768 / 1H11) protein is Large ribosomal subunit protein uL5.